The following is a 706-amino-acid chain: Gamma-adducin (706 aa).

The span at methionine 1–threonine 11 shows a compositional bias: low complexity. The tract at residues methionine 1–arginine 23 is disordered. Residue serine 2 is modified to N-acetylserine. Phosphoserine is present on residues serine 31, serine 42, serine 64, serine 402, serine 414, serine 423, serine 442, and serine 461. 4 disordered regions span residues alanine 471–asparagine 495, proline 534–histidine 556, glutamine 574–glutamate 610, and threonine 651–alanine 706. Lysine 484 is covalently cross-linked (Glycyl lysine isopeptide (Lys-Gly) (interchain with G-Cter in SUMO2)). Phosphoserine is present on residues serine 583, serine 585, and serine 590. Composition is skewed to low complexity over residues serine 590–proline 605 and threonine 651–isoleucine 662. Phosphoserine is present on residues serine 673, serine 677, serine 679, serine 681, and serine 683. A compositionally biased stretch (basic residues) spans proline 682–alanine 706. Residues lysine 684–lysine 701 form an interaction with calmodulin region.

The protein belongs to the aldolase class II family. Adducin subfamily. In terms of assembly, heterodimer of an alpha and a gamma subunit. In terms of processing, sumoylated. Post-translationally, proteolytically cleaved by asparagine endopeptidase (AEP) into 2 fragments. Overexpression of the 1-357 fragment induces neuronal apoptosis, and overexpression of either 1-357 or 358-706 fragment increases the degeneration of dendritic spines. Overexpression of the 1-357 fragment impairs neurite outgrowth by downregulating the expression of Rac2, and induces synaptic dysfunction and cognitive impairments in tau P301S transgenic mice, a mouse model for Alzheimer disease (AD). In terms of tissue distribution, cleavage fragment 1-357 is expressed in the brain and the expression increases with age (at protein level). The fragment is expressed in the cortex, hippocampal CA1 region and hippocampal dentate gyrus in tau P301S transgenic mice, a mouse model for Alzheimer disease (AD) (at protein level). The fragment is only weakly expressed in non-transgenic mouse brain sections (at protein level).

It is found in the cytoplasm. The protein resides in the cytoskeleton. Its subcellular location is the cell membrane. Functionally, membrane-cytoskeleton-associated protein that promotes the assembly of the spectrin-actin network. Plays a role in actin filament capping. Binds to calmodulin. Involved in myogenic reactivity of the renal afferent arteriole (Af-art), renal interlobular arteries and middle cerebral artery (MCA) to increased perfusion pressure. Involved in regulation of potassium channels in the vascular smooth muscle cells (VSMCs) of the Af-art and MCA ex vivo. Involved in regulation of glomerular capillary pressure, glomerular filtration rate (GFR) and glomerular nephrin expression in response to hypertension. Involved in renal blood flow (RBF) autoregulation. Plays a role in podocyte structure and function. Regulates globular monomer actin (G-actin) and filamentous polymer actin (F-actin) ratios in the primary podocytes affecting actin cytoskeleton organization. Regulates expression of synaptopodin, RhoA, Rac1 and CDC42 in the renal cortex and the primary podocytes. Regulates expression of nephrin in the glomeruli and in the primary podocytes, expression of nephrin and podocinin in the renal cortex, and expression of focal adhesion proteins integrin alpha-3 and integrin beta-1 in the glomeruli. Involved in cell migration and cell adhesion of podocytes, and in podocyte foot process effacement. Regulates expression of profibrotics markers MMP2, MMP9, TGF beta-1, tubular tight junction protein E-cadherin, and mesenchymal markers vimentin and alpha-SMA. Promotes the growth of neurites. This Mus musculus (Mouse) protein is Gamma-adducin (Add3).